Reading from the N-terminus, the 62-residue chain is Photosystem II reaction center protein Z (62 aa).

2 helical membrane-spanning segments follow: residues 8 to 28 (AVFA…VVFA) and 41 to 61 (FSGT…NSLI).

It belongs to the PsbZ family. PSII is composed of 1 copy each of membrane proteins PsbA, PsbB, PsbC, PsbD, PsbE, PsbF, PsbH, PsbI, PsbJ, PsbK, PsbL, PsbM, PsbT, PsbY, PsbZ, Psb30/Ycf12, at least 3 peripheral proteins of the oxygen-evolving complex and a large number of cofactors. It forms dimeric complexes.

The protein resides in the plastid. Its subcellular location is the chloroplast thylakoid membrane. Functionally, may control the interaction of photosystem II (PSII) cores with the light-harvesting antenna, regulates electron flow through the 2 photosystem reaction centers. PSII is a light-driven water plastoquinone oxidoreductase, using light energy to abstract electrons from H(2)O, generating a proton gradient subsequently used for ATP formation. The sequence is that of Photosystem II reaction center protein Z from Oenothera elata subsp. hookeri (Hooker's evening primrose).